The sequence spans 219 residues: 2-C-methyl-D-erythritol 4-phosphate cytidylyltransferase (219 aa).

The protein belongs to the IspD/TarI cytidylyltransferase family. IspD subfamily.

The enzyme catalyses 2-C-methyl-D-erythritol 4-phosphate + CTP + H(+) = 4-CDP-2-C-methyl-D-erythritol + diphosphate. It functions in the pathway isoprenoid biosynthesis; isopentenyl diphosphate biosynthesis via DXP pathway; isopentenyl diphosphate from 1-deoxy-D-xylulose 5-phosphate: step 2/6. Its function is as follows. Catalyzes the formation of 4-diphosphocytidyl-2-C-methyl-D-erythritol from CTP and 2-C-methyl-D-erythritol 4-phosphate (MEP). The sequence is that of 2-C-methyl-D-erythritol 4-phosphate cytidylyltransferase from Chlamydia trachomatis serovar L2 (strain ATCC VR-902B / DSM 19102 / 434/Bu).